A 91-amino-acid chain; its full sequence is DNA-directed RNA polymerase subunit omega (91 aa).

The protein belongs to the RNA polymerase subunit omega family. In terms of assembly, the RNAP catalytic core consists of 2 alpha, 1 beta, 1 beta' and 1 omega subunit. When a sigma factor is associated with the core the holoenzyme is formed, which can initiate transcription.

The enzyme catalyses RNA(n) + a ribonucleoside 5'-triphosphate = RNA(n+1) + diphosphate. In terms of biological role, promotes RNA polymerase assembly. Latches the N- and C-terminal regions of the beta' subunit thereby facilitating its interaction with the beta and alpha subunits. The protein is DNA-directed RNA polymerase subunit omega of Yersinia pestis bv. Antiqua (strain Antiqua).